A 157-amino-acid chain; its full sequence is Small ribosomal subunit protein uS7 (157 aa).

This sequence belongs to the universal ribosomal protein uS7 family. As to quaternary structure, part of the 30S ribosomal subunit. Contacts proteins S9 and S11.

One of the primary rRNA binding proteins, it binds directly to 16S rRNA where it nucleates assembly of the head domain of the 30S subunit. Is located at the subunit interface close to the decoding center, probably blocks exit of the E-site tRNA. The sequence is that of Small ribosomal subunit protein uS7 from Blochmanniella floridana.